We begin with the raw amino-acid sequence, 263 residues long: MSFVDLEQGRHKIEQNGDFPALASSIAQEIHALRGNTAAIHRYLVNNLTKNLHEVLEQSRELSQKVRSDLVRLANIKDTKYGEEASSFALSKLTRDFNTVLAELQRVQQKCAQQESDSVAAAQAALNQDVGQHFIEEEERNVSLSNNSSGQRQPLTESKISNSQLEYQQRLINERQGEIENLTQGINELNEIFRDLSTIINEQGELVTNIEYNVGNTSTNTKNASRQLQIANEHSRKARKRSFCFLVILVVILGVILTALIMG.

The tract at residues 140 to 159 is disordered; the sequence is RNVSLSNNSSGQRQPLTESK. Over residues 142–159 the composition is skewed to polar residues; it reads VSLSNNSSGQRQPLTESK. A phosphoserine mark is found at Ser148 and Ser163. The region spanning 169 to 231 is the t-SNARE coiled-coil homology domain; the sequence is QRLINERQGE…KNASRQLQIA (63 aa).

Belongs to the syntaxin family.

It localises to the endoplasmic reticulum. Functionally, has a role in vesicle-mediated transport but not with protein transport from Golgi to vesicle. The sequence is that of Syntaxin pep12 (pep12) from Schizosaccharomyces pombe (strain 972 / ATCC 24843) (Fission yeast).